The following is a 290-amino-acid chain: uncharacterized protein (290 aa).

The protein resides in the cytoplasm. This is an uncharacterized protein from Saccharomyces cerevisiae (strain ATCC 204508 / S288c) (Baker's yeast).